The chain runs to 704 residues: Protein kinase C-like 1 (704 aa).

2 positions are modified to phosphothreonine; by autocatalysis: threonine 89 and threonine 139. 2 Phorbol-ester/DAG-type zinc fingers span residues 165–215 and 237–287; these read GHQF…IMQC and PHRF…SNLC. The residue at position 324 (threonine 324) is a Phosphothreonine; by autocatalysis. The Protein kinase domain occupies 375–634; it reads FNLLKVLGKG…DGPIRQHCFF (260 aa). Residues 381–389 and lysine 404 each bind ATP; that span reads LGKGSFGKV. Aspartate 499 serves as the catalytic Proton acceptor. The AGC-kinase C-terminal domain maps to 635–704; it reads RGVDWKRFEN…FSYTNPHFSK (70 aa).

It belongs to the protein kinase superfamily. AGC Ser/Thr protein kinase family. PKC subfamily.

It carries out the reaction L-seryl-[protein] + ATP = O-phospho-L-seryl-[protein] + ADP + H(+). The catalysed reaction is L-threonyl-[protein] + ATP = O-phospho-L-threonyl-[protein] + ADP + H(+). Functionally, diacylglycerol (DAG)-dependent serine/threonine-protein kinase that phosphorylates a range of cellular proteins. Phosphorylates mlk-1, a component of the JNK pathway. Involved in axon regeneration after injury probably by activating the JNK pathway. Plays a role in resistance to fungal infection and in wound healing by promoting expression of antimicrobial peptide nlp-29 in the epidermis downstream of gpa-12 and plc-3 and upstream of tir-1-p38-like pathway. Probably by regulating neuronal transmission in ALA neurons, regulates the decrease in pharyngeal pumping during the quiescent state that precedes each larval molt, downstream of lin-3 and receptor let-23 and phospholipase plc-3. In Caenorhabditis elegans, this protein is Protein kinase C-like 1 (tpa-1).